We begin with the raw amino-acid sequence, 374 residues long: Chaperone protein DnaJ (374 aa).

A J domain is found at 5 to 70 (DYYEVLGLEK…DKKANYDRFG (66 aa)). The CR-type zinc-finger motif lies at 137–219 (GVEKSINITR…CHGAGHVRKK (83 aa)). Zn(2+) is bound by residues Cys150, Cys153, Cys167, Cys170, Cys193, Cys196, Cys207, and Cys210. CXXCXGXG motif repeat units lie at residues 150 to 157 (CETCGGTG), 167 to 174 (CDKCGGTG), 193 to 200 (CDKCGGRG), and 207 to 214 (CHECHGAG).

The protein belongs to the DnaJ family. As to quaternary structure, homodimer. Zn(2+) is required as a cofactor.

The protein localises to the cytoplasm. Participates actively in the response to hyperosmotic and heat shock by preventing the aggregation of stress-denatured proteins and by disaggregating proteins, also in an autonomous, DnaK-independent fashion. Unfolded proteins bind initially to DnaJ; upon interaction with the DnaJ-bound protein, DnaK hydrolyzes its bound ATP, resulting in the formation of a stable complex. GrpE releases ADP from DnaK; ATP binding to DnaK triggers the release of the substrate protein, thus completing the reaction cycle. Several rounds of ATP-dependent interactions between DnaJ, DnaK and GrpE are required for fully efficient folding. Also involved, together with DnaK and GrpE, in the DNA replication of plasmids through activation of initiation proteins. The chain is Chaperone protein DnaJ from Clostridium acetobutylicum (strain ATCC 824 / DSM 792 / JCM 1419 / IAM 19013 / LMG 5710 / NBRC 13948 / NRRL B-527 / VKM B-1787 / 2291 / W).